We begin with the raw amino-acid sequence, 881 residues long: Heat shock protein 70 homolog LHS1 (881 aa).

The signal sequence occupies residues 1-20 (MRNVLRLLFLTAFVAIGSLA). N-linked (GlcNAc...) asparagine glycans are attached at residues Asn128, Asn458, Asn474, Asn481, Asn489, Asn527, and Asn844. Over residues 833–844 (RKLEQEKSRNNN) the composition is skewed to basic and acidic residues. The segment at 833-881 (RKLEQEKSRNNNETESTVINSADDKTTIVNDKTTESNPSSEEDILHDEL) is disordered. Residues 859-871 (TIVNDKTTESNPS) are compositionally biased toward polar residues. Residues 872 to 881 (SEEDILHDEL) show a composition bias toward acidic residues. Residues 878 to 881 (HDEL) carry the Prevents secretion from ER motif.

This sequence belongs to the heat shock protein 70 family. As to quaternary structure, interacts with the heat shock protein 70 (HSP70) KAR2, and this stimulates nucleotide exchange on KAR2. KAR2 in turn acts to stimulate the ATPase activity of LHS1. In terms of processing, N-glycosylated.

Its subcellular location is the endoplasmic reticulum lumen. It catalyses the reaction ATP + H2O = ADP + phosphate + H(+). In terms of biological role, chaperone required for protein translocation and folding in the endoplasmic reticulum. The protein is Heat shock protein 70 homolog LHS1 (LHS1) of Saccharomyces cerevisiae (strain ATCC 204508 / S288c) (Baker's yeast).